The primary structure comprises 344 residues: Alkyl hydroperoxide reductase Rv2159c (344 aa).

The interval 49–50 (AG) is important for interaction with PknI. Cysteine 84 functions as the Cysteine sulfenic acid (-SOH) intermediate in the catalytic mechanism.

Belongs to the AhpD family. As to quaternary structure, interacts with the serine/threonine-protein kinase PknI. The PknI-Rv2159c interaction is mediated through phosphorylation independent physical interaction.

With respect to regulation, interaction with PknI increases the peroxidase activity by several folds. In terms of biological role, involved in protection against oxidative stresses. May play a significant role in maintaining the cellular homeostasis during stress and virulence of M.tuberculosis. In vitro, catalyzes the decomposition of cumene hydroperoxide (CHP) to acetophenone. The chain is Alkyl hydroperoxide reductase Rv2159c from Mycobacterium tuberculosis (strain ATCC 25618 / H37Rv).